The following is a 90-amino-acid chain: Essential MCU regulator, mitochondrial (90 aa).

Residues 1 to 48 lie on the Mitochondrial matrix side of the membrane; the sequence is MVLSRLNPIVKQCVLGNRPNLVSLGPVRTAVYSKSGGLLPEPHRTSFG. Residues 49–76 traverse the membrane as a helical segment; it reads IIRLILTVVPGLLIGAAISKNIANFLEE. Over 77–90 the chain is Mitochondrial intermembrane; it reads NDLFVPSDDDDDDD.

The protein belongs to the SMDT1/EMRE family. In terms of assembly, component of the uniplex complex, composed of MCU, EMRE, MICU1 and MICU2 in a 4:4:1:1 stoichiometry.

The protein resides in the mitochondrion inner membrane. Functionally, essential regulatory subunit of the mitochondrial calcium uniporter complex (uniplex), a complex that mediates calcium uptake into mitochondria. Required to bridge the calcium-sensing proteins MICU1 with the calcium-conducting subunit MCU. Acts by mediating activation of MCU and retention of MICU1 to the MCU pore, in order to ensure tight regulation of the uniplex complex and appropriate responses to intracellular calcium signaling. The protein is Essential MCU regulator, mitochondrial (EMRE) of Tribolium castaneum (Red flour beetle).